Reading from the N-terminus, the 396-residue chain is Phosphoglycerate kinase (396 aa).

Substrate contacts are provided by residues 19–21 (DFN), Arg34, 57–60 (HLGK), Arg116, and Arg153. ATP contacts are provided by residues Lys204, Glu324, and 351–354 (GGDT).

Belongs to the phosphoglycerate kinase family. In terms of assembly, monomer.

It localises to the cytoplasm. It carries out the reaction (2R)-3-phosphoglycerate + ATP = (2R)-3-phospho-glyceroyl phosphate + ADP. It participates in carbohydrate degradation; glycolysis; pyruvate from D-glyceraldehyde 3-phosphate: step 2/5. This is Phosphoglycerate kinase from Maridesulfovibrio salexigens (strain ATCC 14822 / DSM 2638 / NCIMB 8403 / VKM B-1763) (Desulfovibrio salexigens).